The primary structure comprises 372 residues: MNPKYKPLFEPFTFKSGVTINNRIAVAPMTHYASNEDGTISEAELDYIIPRSKEMGMVITACANVTPDGKAFPGQPAIHDDSNIPGLKKLAQAIQAQGAKAVVQIHHGGIECPSELVPQQDVVGPSDVFDNGKQIARALTEEEVENIVKAFGEATRRAIEAGFDGVEIHGANGYLIQQFYSPKTNQRTDRWGGSDEKRLAFPLAIVDEVKKAASEHAKGAFLVGYRLSPEEPETPGLTMTETYTLVDALGDKELDYLHISLMDVNSKARRGADPTRTRMDLLNERVGNKVPLIAVGSIHSADDALAVIENGIPLVAMGREILVDPNWTVKVKEGREKQIETVIKGTDKEKYHLPEPLWQAIVNTQGWVPYKD.

It belongs to the NADH:flavin oxidoreductase/NADH oxidase family.

This is Probable NADH-dependent flavin oxidoreductase YqiG (yqiG) from Bacillus subtilis (strain 168).